A 483-amino-acid chain; its full sequence is MFENTLQGALIGVTVIPTLILSLPTTSFVRYAIYPLPALLVLRALLWPPTEGLAKETYLLGLLMTDTSFKMFDYLYLQGYNAPAKFLQVDRVGRTITKVHEYPKDTLGQVKWALSLVTSHRGIGWNIQVPLQKIKYPSSRVAYIFESMVSILSIYLGLYTCGSLCDYMVQVLRKEADSPYPWVYGLFKNSIFQMVVAFMGIFAMVSNSVLVYNLARMICVTSGIKGDWGKIESWPNMFGGFEDAWSIRNVWGRAWHQNLRRCLTAPGEKVSSLIFGSSPKLGRVPRLIRRYFLVFSAFGVSGLLHSLAVYYGSKTDTMPYEDSTPLHMRPGWYVTGYFFYIQPFAITLEDFICWATGTSTESKGVKATKVRWFVGMVYTLTWFTWGTAVLWIHPQLASLGYQRTSDAELGYVHILVSTSEAASILPLNPWPAVVKTVSPTFWDVYGYFKSSGLGGYLYLYAYTTLEILGGSGFNVLKSASSVV.

The next 8 helical transmembrane spans lie at A9–V29, I33–L53, V141–C161, I191–V211, F292–G312, V334–W354, W372–I392, and L453–F473.

Belongs to the wax synthase family.

The protein resides in the membrane. Its pathway is secondary metabolite biosynthesis; terpenoid biosynthesis. Its function is as follows. Acetyltransferase; part of the gene cluster that mediates the biosynthesis of sesquiterpenyl epoxy-cyclohexenoids (SECs) such as anthrobotrisins and arthrosporols, metabolites that possess a novel hybrid carbon skeleton consisting of a polyketide-derived epoxycyclohexenol combined with a terpenoid-derived monocyclic sesquiterpenol substructure (PKS-PTS hybrid). The SEC pathway plays an important role for fungal soil colonization via decreasing fungal nematode-capturing ability. The role of the acetyltransferase in SEC biosynthesis has still to be determined. The pathway begins with the biosynthesis of 6-methylsalicylic acid (6-MSA), the first precursor of the polyketide-derived epoxycyclohexenol in arthrosporols, by the polyketide synthase (PKS) AOL_s00215g283 via condensation of 1 acetate and 3 malonate units. The 6-methylsalicylic acid decarboxylase AOL_s00215g281 then catalyzes the decarboxylation of 6-methylsalicylic acid to yield m-cresol. The cytochrome P450 monooxygenase AOL_s00215g282 further oxidizes m-cresol to yield toluquinol. With the assistance of the oxidoreductase AOL_s00215g277, the polyprenyl transferase AOL_s00215g276 catalyzes the farnesylation of toluquinol to produce farnesyl hydroquinone, the hybrid precursor for biosynthesis of SECs. Farnesyl hydroquinone undergoes epoxidation and then subsequent dehydrogenation to form farnesyl epoxy-quinone, the first and simplest SEC. The cytochrome P450 monooxygenase AOL_s00215g278 and the FAD-dependent monooxygenase AOL_s00215g279 might be involved in the oxygenation of the phenol moiety, most likely in the epoxy formation. The cytochrome P450 monooxygenases AOL_s00215g274 and AOL_s00215g280 are involved in specific regional ketone reductions at respectively C-4 and C-1 of farnesyl epoxy-quinone PubMed:33823587. This is Acetyltransferase AOL_s00215g273 from Arthrobotrys oligospora (strain ATCC 24927 / CBS 115.81 / DSM 1491) (Nematode-trapping fungus).